The sequence spans 318 residues: NADH-ubiquinone oxidoreductase chain 1 (318 aa).

8 helical membrane-spanning segments follow: residues 2 to 22, 70 to 90, 100 to 120, 147 to 167, 171 to 191, 223 to 243, 253 to 273, and 294 to 314; these read FFIN…FLTL, MFIL…IPLP, LGVL…LWSG, AIIL…TLII, HMWL…STLA, FFLA…ILFF, ELYS…FLWI, and LPLT…TASI.

Belongs to the complex I subunit 1 family. In terms of assembly, core subunit of respiratory chain NADH dehydrogenase (Complex I) which is composed of 45 different subunits.

The protein resides in the mitochondrion inner membrane. The enzyme catalyses a ubiquinone + NADH + 5 H(+)(in) = a ubiquinol + NAD(+) + 4 H(+)(out). Its function is as follows. Core subunit of the mitochondrial membrane respiratory chain NADH dehydrogenase (Complex I) which catalyzes electron transfer from NADH through the respiratory chain, using ubiquinone as an electron acceptor. Essential for the catalytic activity and assembly of complex I. This is NADH-ubiquinone oxidoreductase chain 1 (MT-ND1) from Canis lupus familiaris (Dog).